The primary structure comprises 122 residues: Phospholipase A2 crotoxin basic chain (122 aa).

7 disulfide bridges follow: Cys26/Cys115, Cys28/Cys44, Cys43/Cys95, Cys49/Cys122, Cys50/Cys88, Cys57/Cys81, and Cys75/Cys86. Residues Tyr27, Gly29, and Gly31 each contribute to the Ca(2+) site. Residue His47 is part of the active site. Asp48 contacts Ca(2+). Asp89 is a catalytic residue.

In terms of assembly, heterodimer of one acidic (CA also named crotapotin) and one basic (CB) subunits; non-covalently linked. The cofactor is Ca(2+). Expressed by the venom gland.

The protein resides in the secreted. It catalyses the reaction a 1,2-diacyl-sn-glycero-3-phosphocholine + H2O = a 1-acyl-sn-glycero-3-phosphocholine + a fatty acid + H(+). In terms of biological role, heterodimer CA-CB: Crotoxin is a potent presynaptic neurotoxin that possesses phospholipase A2 (PLA2) activity and exerts a lethal action by blocking neuromuscular transmission. It consists of a non-covalent association of a basic and weakly toxic PLA2 subunit (CB), with a small acidic, non-enzymatic and non-toxic subunit (CA also named crotapotin). The complex acts by binding to a specific 48-kDa protein (R48) receptor located on presynaptic membranes, forming a transient ternary complex CA-CB-R48, followed by dissociation of the CA-CB complex and release of the CA subunit. At equilibrium, only the CB subunits remain associated with the specific crotoxin receptor. In addition to neurotoxicity, crotoxin has been found to exert nephrotoxicity, and cardiovascular toxicity. Moreover, anti-inflammatory, immunomodulatory, anti-tumor and analgesic effects of crotoxin have also been reported. Functionally, monomer CB: The basic subunit of crotoxin is a snake venom phospholipase A2 (PLA2) that exhibits weak neurotoxicity and strong anticoagulant effects by binding to factor Xa (F10) and inhibiting the prothrombinase activity. In addition, it exerts myotoxicity, nephrotoxicity, and cardiovascular toxicity as well as anti-inflammatory, immunomodulatory, anti-tumor and analgesic effects. Also shows a strong antimicrobial activity against X.axonopodis passiforae (Gram-negative) which is completely dependent on the enzymatic activity. PLA2 catalyzes the calcium-dependent hydrolysis of the 2- acyl groups in 3-sn-phosphoglycerides. The protein is Phospholipase A2 crotoxin basic chain of Crotalus durissus collilineatus (Brazilian rattlesnake).